Here is a 200-residue protein sequence, read N- to C-terminus: Thymidine kinase (200 aa).

Residues 9-16 and 88-91 contribute to the ATP site; these read STMNAGKS and DEAH. Glutamate 89 acts as the Proton acceptor in catalysis. Residues cysteine 146, cysteine 148, cysteine 183, and histidine 186 each contribute to the Zn(2+) site.

It belongs to the thymidine kinase family. As to quaternary structure, homotetramer.

It is found in the cytoplasm. The catalysed reaction is thymidine + ATP = dTMP + ADP + H(+). The polypeptide is Thymidine kinase (Rhizobium etli (strain ATCC 51251 / DSM 11541 / JCM 21823 / NBRC 15573 / CFN 42)).